A 514-amino-acid chain; its full sequence is MPPIRQAVSLAEKKAIRDYYNQSAHRIPQKEVTEWFRKTYNKDLSQSTISEILSPKYSYLDDGSVRLGDIKKIRAPKFPLLDNAVYEWLQQREVEGLPISGDMIKQAATRFWSKIPAYASLPLPDFSNGWLDKFRRRHYIQQSAVNQALESIKFEVFREYPVHIQEFIRPYAQKDIFCVGGTSLFWKLTPNKQNLDYQEIQGMKRGKAKVSLIMCCNADGSERLPLWIVGYAQNPRSFEQCGIFPKSMNFEWKWNGRASISPIIMEEWLRWFDTRMQGRKVLLMLESNDTYQFGVESVRRFKGGFQNTSVFRIPEKTLDIKSPFEQGIVDTFKANYRRYWLQYSLNQINILRDPLKAVNVLKAIRWMLWSWNFGVSEKTIQASFLRSGLLGPHSEAEGQGMESYQKAIMEIGNLISSKGSEAVKQINEYIRPSEEDETKLHQDAVDTVAAEFLEERRFESDEEEDVEPQISNVEAAMAFEVLIKYFEQHENGDPSFVLDLYRRQRVIAPNNLIA.

Residues 69–144 (DIKKIRAPKF…RRRHYIQQSA (76 aa)) form the HTH CENPB-type domain.

Its subcellular location is the nucleus. The protein resides in the chromosome. The protein localises to the centromere. Functionally, binds to centromeric K-type repeat DNA and ARS3002 DNA. The CBH-binding consensus sequence is Py-Pu-A-T-A-T-Py-Pu-T-A. The sequence is that of CENP-B homolog protein 1 (cbh1) from Schizosaccharomyces pombe (strain 972 / ATCC 24843) (Fission yeast).